A 321-amino-acid chain; its full sequence is Ribosomal RNA small subunit methyltransferase H (321 aa).

S-adenosyl-L-methionine contacts are provided by residues 43 to 45, Asp-63, Phe-89, Asp-110, and Gln-117; that span reads GGH. Residues 286–321 form a disordered region; it reads HPAGKALRAGPRETRDNPRSRSAVLRVAERSERHAA. 2 stretches are compositionally biased toward basic and acidic residues: residues 295 to 304 and 312 to 321; these read GPRETRDNPR and VAERSERHAA.

This sequence belongs to the methyltransferase superfamily. RsmH family.

The protein localises to the cytoplasm. The catalysed reaction is cytidine(1402) in 16S rRNA + S-adenosyl-L-methionine = N(4)-methylcytidine(1402) in 16S rRNA + S-adenosyl-L-homocysteine + H(+). Functionally, specifically methylates the N4 position of cytidine in position 1402 (C1402) of 16S rRNA. The chain is Ribosomal RNA small subunit methyltransferase H from Acidithiobacillus ferrooxidans (strain ATCC 23270 / DSM 14882 / CIP 104768 / NCIMB 8455) (Ferrobacillus ferrooxidans (strain ATCC 23270)).